The sequence spans 112 residues: Colipase (112 aa).

The first 17 residues, 1–17, serve as a signal peptide directing secretion; it reads MEKVLALLLVTLTVAYA. Positions 18 to 22 are cleaved as a propeptide — enterostatin, activation peptide; that stretch reads VPDPR. 5 cysteine pairs are disulfide-bonded: C34/C45, C40/C56, C44/C78, C66/C86, and C80/C104.

This sequence belongs to the colipase family. Forms a 1:1 stoichiometric complex with pancreatic lipase. As to expression, expressed by the pancreas.

It localises to the secreted. In terms of biological role, colipase is a cofactor of pancreatic lipase. It allows the lipase to anchor itself to the lipid-water interface. Without colipase the enzyme is washed off by bile salts, which have an inhibitory effect on the lipase. Functionally, enterostatin has a biological activity as a satiety signal. This is Colipase (CLPS) from Sus scrofa (Pig).